The primary structure comprises 106 residues: Putative double-stranded DNA mimic protein VV1_3059 (106 aa).

It belongs to the putative dsDNA mimic protein family.

May act as a double-stranded DNA (dsDNA) mimic. Probably regulates the activity of a dsDNA-binding protein. The polypeptide is Putative double-stranded DNA mimic protein VV1_3059 (Vibrio vulnificus (strain CMCP6)).